The sequence spans 318 residues: Acetyl-coenzyme A carboxylase carboxyl transferase subunit alpha (318 aa).

Residues 38-292 (KLEKRLAKLE…NKTITKSLHA (255 aa)) form the CoA carboxyltransferase C-terminal domain.

Belongs to the AccA family. As to quaternary structure, acetyl-CoA carboxylase is a heterohexamer composed of biotin carboxyl carrier protein (AccB), biotin carboxylase (AccC) and two subunits each of ACCase subunit alpha (AccA) and ACCase subunit beta (AccD).

It localises to the cytoplasm. It carries out the reaction N(6)-carboxybiotinyl-L-lysyl-[protein] + acetyl-CoA = N(6)-biotinyl-L-lysyl-[protein] + malonyl-CoA. The protein operates within lipid metabolism; malonyl-CoA biosynthesis; malonyl-CoA from acetyl-CoA: step 1/1. Component of the acetyl coenzyme A carboxylase (ACC) complex. First, biotin carboxylase catalyzes the carboxylation of biotin on its carrier protein (BCCP) and then the CO(2) group is transferred by the carboxyltransferase to acetyl-CoA to form malonyl-CoA. This is Acetyl-coenzyme A carboxylase carboxyl transferase subunit alpha from Listeria welshimeri serovar 6b (strain ATCC 35897 / DSM 20650 / CCUG 15529 / CIP 8149 / NCTC 11857 / SLCC 5334 / V8).